The sequence spans 540 residues: Cytochrome P450 monooxygenase ptmG (540 aa).

N-linked (GlcNAc...) asparagine glycosylation occurs at asparagine 17. The next 2 membrane-spanning stretches (helical) occupy residues 20 to 40 (VMTLGQILVIPVALLVVYICI) and 325 to 345 (AAFLIGATSGASVISYAFLLL). Cysteine 474 provides a ligand contact to heme.

Belongs to the cytochrome P450 family. Heme is required as a cofactor.

The protein resides in the membrane. It participates in secondary metabolite biosynthesis. Functionally, cytochrome P450 monooxygenase; part of the gene cluster that mediates the biosynthesis of the indole diterpenes penitrems. The geranylgeranyl diphosphate (GGPP) synthase ptmG catalyzes the first step in penitrem biosynthesis via conversion of farnesyl pyrophosphate and isopentyl pyrophosphate into geranylgeranyl pyrophosphate (GGPP). Condensation of indole-3-glycerol phosphate with GGPP by the prenyl transferase ptmC then forms 3-geranylgeranylindole (3-GGI). Epoxidation by the FAD-dependent monooxygenase ptmM leads to a epoxidized-GGI that is substrate of the terpene cyclase ptmB for cyclization to yield paspaline. Paspaline is subsequently converted to 13-desoxypaxilline by the cytochrome P450 monooxygenase ptmP, the latter being then converted to paxilline by the cytochrome P450 monooxygenase ptmQ. Paxilline is converted to beta-paxitriol via C-10 ketoreduction by the short-chain dehydrogenase ptmH which can be monoprenylated at the C-20 by the indole diterpene prenyltransferase ptmD. A two-step elimination (acetylation and elimination) process performed by the O-acetyltransferase ptmV and ptmI leads to the production of the prenylated form of penijanthine. The FAD-linked oxidoreductase ptmO then converts the prenylated form of penijanthine into PC-M5 which is in turn transformed into PC-M4 by the aromatic dimethylallyltransferase ptmE. Five sequential oxidative transformations performed by the cytochrome P450 monooxygenases ptmK, ptmU, ptmL, ptmN and ptmJ yield the various penitrem compounds. PtmK, ptmU and ptmM are involved in the formation of the key bicyclic ring of penitrem C via the formation of the intermediates secopenitrem D and penitrem D. PtmL catalyzes the epoxidation of penitrem D and C to yield penitrem B and F, respectively. PtmJ catalyzes the last benzylic hydroxylation to convert penitrem B to prenitrem E and penitrem F to penitrem A. This chain is Cytochrome P450 monooxygenase ptmG, found in Penicillium ochrochloron.